A 515-amino-acid chain; its full sequence is Fc receptor-like protein 4 (515 aa).

A signal peptide spans 1-19 (MLLWASLLAFAPVCGQSAA). Topologically, residues 20–387 (AHKPVISVHP…RETPGNRDGL (368 aa)) are extracellular. Ig-like C2-type domains lie at 23–97 (PVIS…NPVR), 102–183 (SDSL…NFKI), 193–271 (PELK…GNIH), and 275–374 (PSLQ…MVLN). 4 disulfide bridges follow: Cys44–Cys85, Cys123–Cys167, Cys212–Cys261, and Cys310–Cys359. The N-linked (GlcNAc...) asparagine glycan is linked to Asn374. The helical transmembrane segment at 388-408 (VAAGATGGLLSALLLAVALLF) threads the bilayer. Residues 409–515 (HCWRRRKSGV…GKISSKDEES (107 aa)) lie on the Cytoplasmic side of the membrane. 3 consecutive short sequence motifs (ITIM motif) follow at residues 449–454 (SLYVDV), 461–466 (LVYSEI), and 491–496 (VVYSEV). Residues 494–515 (SEVKTQHPDNSAGKISSKDEES) form a disordered region.

As to quaternary structure, interacts with PTPN6 and PTPN11. In terms of processing, phosphorylated on cytoplasmic tyrosines upon activation. As to expression, specifically expressed by memory and monocytoid B-cells which populate spleen and lymph nodes. Preferentially expressed in memory B-cells associated with mucosal tissue (at protein level).

It is found in the cell membrane. In terms of biological role, may function as an inhibitor of the B-cell receptor signaling. May function in the B-cell-mediated immune response. The polypeptide is Fc receptor-like protein 4 (FCRL4) (Homo sapiens (Human)).